The chain runs to 220 residues: Ribosome maturation factor RimP (220 aa).

Residues Lys-173 to Glu-220 are disordered.

It belongs to the RimP family.

It is found in the cytoplasm. Its function is as follows. Required for maturation of 30S ribosomal subunits. This is Ribosome maturation factor RimP from Chelativorans sp. (strain BNC1).